The sequence spans 203 residues: Putative 3-methyladenine DNA glycosylase (203 aa).

Belongs to the DNA glycosylase MPG family.

In Clostridium botulinum (strain ATCC 19397 / Type A), this protein is Putative 3-methyladenine DNA glycosylase.